The sequence spans 156 residues: C-type lectin lectoxin-Phi1 (156 aa).

The N-terminal stretch at 1-23 (MGRFIFVSLGLLVLAFSLSGIGA) is a signal peptide. Disulfide bonds link C27–C38, C55–C154, and C129–C146. Residues 34-155 (HNVSCYKLIN…CNRRHRFLCK (122 aa)) form the C-type lectin domain. N35 and N109 each carry an N-linked (GlcNAc...) asparagine glycan. The Mannose-binding signature appears at 119–121 (EPN). Residues E127, N142, and D143 each contribute to the Ca(2+) site.

The protein belongs to the true venom lectin family. As to expression, expressed by the venom gland.

It localises to the secreted. Mannose-binding lectin which recognizes specific carbohydrate structures and agglutinates a variety of animal cells by binding to cell-surface glycoproteins and glycolipids. May be a calcium-dependent lectin. This chain is C-type lectin lectoxin-Phi1, found in Philodryas olfersii (Green snake).